We begin with the raw amino-acid sequence, 330 residues long: Aspartate--ammonia ligase (330 aa).

This sequence belongs to the class-II aminoacyl-tRNA synthetase family. AsnA subfamily.

It localises to the cytoplasm. The catalysed reaction is L-aspartate + NH4(+) + ATP = L-asparagine + AMP + diphosphate + H(+). The protein operates within amino-acid biosynthesis; L-asparagine biosynthesis; L-asparagine from L-aspartate (ammonia route): step 1/1. This is Aspartate--ammonia ligase from Streptococcus agalactiae serotype III (strain NEM316).